A 405-amino-acid polypeptide reads, in one-letter code: Riboflavin biosynthesis protein RibBA (405 aa).

The tract at residues 1–205 (MEEIKLNTIE…IKDLIAYRLK (205 aa)) is DHBP synthase. D-ribulose 5-phosphate contacts are provided by residues 30–31 (RE), Asp35, 144–148 (RAGHT), and Glu168. Glu31 is a binding site for Mg(2+). Residue His147 participates in Mg(2+) binding. The tract at residues 206–405 (QESIVEKGVE…RMGHELHNIK (200 aa)) is GTP cyclohydrolase II. 256-260 (RMHSS) provides a ligand contact to GTP. Residues Cys261, Cys272, and Cys274 each contribute to the Zn(2+) site. GTP-binding positions include Gln277, 299-301 (EGR), and Thr321. Asp333 (proton acceptor; for GTP cyclohydrolase activity) is an active-site residue. The Nucleophile; for GTP cyclohydrolase activity role is filled by Arg335. GTP is bound by residues Thr356 and Lys361.

In the N-terminal section; belongs to the DHBP synthase family. It in the C-terminal section; belongs to the GTP cyclohydrolase II family. The cofactor is Mg(2+). It depends on Mn(2+) as a cofactor. Zn(2+) serves as cofactor.

It carries out the reaction D-ribulose 5-phosphate = (2S)-2-hydroxy-3-oxobutyl phosphate + formate + H(+). The enzyme catalyses GTP + 4 H2O = 2,5-diamino-6-hydroxy-4-(5-phosphoribosylamino)-pyrimidine + formate + 2 phosphate + 3 H(+). Its pathway is cofactor biosynthesis; riboflavin biosynthesis; 2-hydroxy-3-oxobutyl phosphate from D-ribulose 5-phosphate: step 1/1. The protein operates within cofactor biosynthesis; riboflavin biosynthesis; 5-amino-6-(D-ribitylamino)uracil from GTP: step 1/4. Functionally, catalyzes the conversion of D-ribulose 5-phosphate to formate and 3,4-dihydroxy-2-butanone 4-phosphate. Catalyzes the conversion of GTP to 2,5-diamino-6-ribosylamino-4(3H)-pyrimidinone 5'-phosphate (DARP), formate and pyrophosphate. The protein is Riboflavin biosynthesis protein RibBA of Porphyromonas gingivalis (strain ATCC 33277 / DSM 20709 / CIP 103683 / JCM 12257 / NCTC 11834 / 2561).